We begin with the raw amino-acid sequence, 61 residues long: Putative protein RenD (61 aa).

This is Putative protein RenD (renD) from Escherichia coli (strain K12).